The sequence spans 399 residues: Proteasome-activating nucleotidase (399 aa).

A coiled-coil region spans residues 19 to 60 (ITYLKRRIRQLELQVRMLEADKERLERELSRLRSEMSRLRQP). ATP is bound by residues 184–189 (GCGKTL) and His323. The tract at residues 397-399 (IYG) is docks into pockets in the proteasome alpha-ring to cause gate opening.

This sequence belongs to the AAA ATPase family. As to quaternary structure, homohexamer. The hexameric complex has a two-ring architecture resembling a top hat that caps the 20S proteasome core at one or both ends. Upon ATP-binding, the C-terminus of PAN interacts with the alpha-rings of the proteasome core by binding to the intersubunit pockets.

It localises to the cytoplasm. Its function is as follows. ATPase which is responsible for recognizing, binding, unfolding and translocation of substrate proteins into the archaeal 20S proteasome core particle. Is essential for opening the gate of the 20S proteasome via an interaction with its C-terminus, thereby allowing substrate entry and access to the site of proteolysis. Thus, the C-termini of the proteasomal ATPase function like a 'key in a lock' to induce gate opening and therefore regulate proteolysis. Unfolding activity requires energy from ATP hydrolysis, whereas ATP binding alone promotes ATPase-20S proteasome association which triggers gate opening, and supports translocation of unfolded substrates. The chain is Proteasome-activating nucleotidase from Pyrococcus horikoshii (strain ATCC 700860 / DSM 12428 / JCM 9974 / NBRC 100139 / OT-3).